The chain runs to 305 residues: Mas-related G-protein coupled receptor member A2B (305 aa).

At 1–17 (MDETLPGSINIRILIPK) the chain is on the extracellular side. Residues 18–38 (LMIIIFGLVGLMGNAIVFWLL) traverse the membrane as a helical segment. Over 39–53 (GFHLRRNAFSVYILN) the chain is Cytoplasmic. The chain crosses the membrane as a helical span at residues 54-74 (LALADFLFLLSSIIASTLFLL). Topologically, residues 75–78 (KVSY) are extracellular. The chain crosses the membrane as a helical span at residues 79–99 (LSIIFHLCFNTIMMVVYITGI). The Cytoplasmic segment spans residues 100 to 132 (SMLSAISTECCLSVLCPTWYRCHRPVHTSTVMC). The chain crosses the membrane as a helical span at residues 133–153 (AVIWVLSLLICILNSYFCAVL). The Extracellular segment spans residues 154–167 (HTRYDNDNECLATN). Residues 168–188 (IFTASYMIFLLVVLCLSSLAL) form a helical membrane-spanning segment. Topologically, residues 189 to 207 (LARLFCGAGQMKLTRFHVT) are cytoplasmic. A helical membrane pass occupies residues 208 to 228 (ILLTLLVFLLCGLPFVIYCIL). The Extracellular segment spans residues 229-244 (LFKIKDDFHVLDVNFY). A helical transmembrane segment spans residues 245–265 (LALEVLTAINSCANPIIYFFV). The Cytoplasmic segment spans residues 266–305 (GSFRHQLKHQTLKMVLQSALQDTPETAENMVEMSSNKAEP).

Belongs to the G-protein coupled receptor 1 family. Mas subfamily. As to expression, expressed in a subset of sensory neurons that includes nociceptors. Expressed in the subclass of non-peptidergic sensory neurons that are IB4(+) and VR1(-).

The protein localises to the cell membrane. Orphan receptor. May be a receptor for RFamide-family neuropeptides such as NPFF and NPAF, which are analgesic in vivo. May regulate nociceptor function and/or development, including the sensation or modulation of pain. The protein is Mas-related G-protein coupled receptor member A2B of Mus musculus (Mouse).